The primary structure comprises 60 residues: Large ribosomal subunit protein uL30 (60 aa).

The protein belongs to the universal ribosomal protein uL30 family. In terms of assembly, part of the 50S ribosomal subunit.

In Desulfitobacterium hafniense (strain DSM 10664 / DCB-2), this protein is Large ribosomal subunit protein uL30.